A 214-amino-acid chain; its full sequence is Avenin (214 aa).

A signal peptide spans 1-28; sequence MKIFFFLALLALVVSATFAQYAESDGSY. Positions 180–214 are disordered; the sequence is RGQESGVFTPKFTQTSFQPYPEGEDESSLINKASE.

In terms of biological role, seed storage protein. In Avena sativa (Oat), this protein is Avenin.